The following is a 340-amino-acid chain: tRNA-specific 2-thiouridylase MnmA (340 aa).

ATP contacts are provided by residues 6 to 13 (AMSGGVDS) and methionine 32. The active-site Nucleophile is the cysteine 92. A disulfide bridge links cysteine 92 with cysteine 186. Glycine 116 lines the ATP pocket. The tract at residues 134-136 (KDQ) is interaction with tRNA. The active-site Cysteine persulfide intermediate is the cysteine 186. The interaction with tRNA stretch occupies residues 288–289 (RY).

The protein belongs to the MnmA/TRMU family.

The protein resides in the cytoplasm. It catalyses the reaction S-sulfanyl-L-cysteinyl-[protein] + uridine(34) in tRNA + AH2 + ATP = 2-thiouridine(34) in tRNA + L-cysteinyl-[protein] + A + AMP + diphosphate + H(+). Catalyzes the 2-thiolation of uridine at the wobble position (U34) of tRNA, leading to the formation of s(2)U34. The sequence is that of tRNA-specific 2-thiouridylase MnmA from Campylobacter concisus (strain 13826).